Consider the following 154-residue polypeptide: 6,7-dimethyl-8-ribityllumazine synthase (154 aa).

Residues Phe-22, 56–58, and 80–82 each bind 5-amino-6-(D-ribitylamino)uracil; these read AFE and AVI. 85-86 lines the (2S)-2-hydroxy-3-oxobutyl phosphate pocket; that stretch reads ST. The active-site Proton donor is His-88. Phe-113 contacts 5-amino-6-(D-ribitylamino)uracil. Arg-127 provides a ligand contact to (2S)-2-hydroxy-3-oxobutyl phosphate.

The protein belongs to the DMRL synthase family.

The enzyme catalyses (2S)-2-hydroxy-3-oxobutyl phosphate + 5-amino-6-(D-ribitylamino)uracil = 6,7-dimethyl-8-(1-D-ribityl)lumazine + phosphate + 2 H2O + H(+). The protein operates within cofactor biosynthesis; riboflavin biosynthesis; riboflavin from 2-hydroxy-3-oxobutyl phosphate and 5-amino-6-(D-ribitylamino)uracil: step 1/2. In terms of biological role, catalyzes the formation of 6,7-dimethyl-8-ribityllumazine by condensation of 5-amino-6-(D-ribitylamino)uracil with 3,4-dihydroxy-2-butanone 4-phosphate. This is the penultimate step in the biosynthesis of riboflavin. This Clostridium beijerinckii (strain ATCC 51743 / NCIMB 8052) (Clostridium acetobutylicum) protein is 6,7-dimethyl-8-ribityllumazine synthase.